Consider the following 304-residue polypeptide: Killer cell immunoglobulin-like receptor 2DS4 (304 aa).

Residues 1–21 form the signal peptide; it reads MSLMVIIMACVGFFLLQGAWP. Residues 22-245 lie on the Extracellular side of the membrane; that stretch reads QEGVHRKPSF…SKTGNPRHLH (224 aa). Ig-like C2-type domains lie at 42–107 and 142–205; these read EETV…VPHS and GENV…FRDA. An intrachain disulfide couples cysteine 49 to cysteine 100. Asparagine 67, asparagine 84, asparagine 144, asparagine 178, and asparagine 211 each carry an N-linked (GlcNAc...) asparagine glycan. Cysteine 149 and cysteine 198 are joined by a disulfide. The segment at 220–239 is disordered; that stretch reads VTGNPSNSWPSPTEPSSKTG. A helical transmembrane segment spans residues 246 to 265; that stretch reads VLIGTSVVKIPFTILLFFLL. At 266–304 the chain is on the cytoplasmic side; it reads HRWCSDKKNAAVMDQEPAGNRTVNSEDSDEQDHQEVSYA. The tract at residues 280–304 is disordered; sequence QEPAGNRTVNSEDSDEQDHQEVSYA.

This sequence belongs to the immunoglobulin superfamily. In terms of assembly, interacts with HLA-F; this interaction is direct.

The protein localises to the cell membrane. Receptor on natural killer (NK) cells for HLA-C alleles. Does not inhibit the activity of NK cells. This is Killer cell immunoglobulin-like receptor 2DS4 from Homo sapiens (Human).